Reading from the N-terminus, the 76-residue chain is MSWYEKYNIVLNPPKRCSSACADNLTTILAEDGNHIRAILYSQPKKLKILQDFLATSRNKMFLYKILDDEIRRVLT.

C17 and C21 are disulfide-bonded.

The protein belongs to the orthopoxvirus OPG128 family. In terms of assembly, interacts with sulfhydryl oxidase OPG072; this interaction involves formation of a transient disulfide-bonded intermediate, allowing disulfide bond transfer. Interacts with OPG088; this interaction involves formation of a transient disulfide-bonded intermediate, allowing disulfide bond transfer.

In terms of biological role, late protein which probably participates in disulfide bond formation by functioning as a thiol-disulfide transfer protein between membrane-associated OPG072 and OPG08. The complete pathway for formation of disulfide bonds in intracellular virion membrane proteins sequentially involves oxidation of OPG072, OPG128 and OPG08. This chain is Protein OPG128 (OPG128), found in Homo sapiens (Human).